The following is a 566-amino-acid chain: E3 ubiquitin-protein ligase RNF220 (566 aa).

Residue Lys277 forms a Glycyl lysine isopeptide (Lys-Gly) (interchain with G-Cter in SUMO2) linkage. A disordered region spans residues 277–297 (KREGESPTASPHSSATDDLHH). Ser390 is subject to Phosphoserine. Residues 485–513 (EDSAVTTFEALKARVRELERQLSRGDRYK) are a coiled coil. The segment at 514 to 522 (CLICMDSYS) is required for targeting to the cytoplasm. Residues 514-553 (CLICMDSYSMPLTSIQCWHVHCEECWLRTLGAKKLCPQCN) form an RING-type zinc finger.

In terms of assembly, interacts with SIN3B. Interacts with CTNNB1 (via Armadillo repeats 2-8). Interacts with USP7 (via MATH domain). In terms of processing, auto-ubiquitinated; leads to proteasomal degradation.

It is found in the cytoplasm. It localises to the nucleus. The catalysed reaction is S-ubiquitinyl-[E2 ubiquitin-conjugating enzyme]-L-cysteine + [acceptor protein]-L-lysine = [E2 ubiquitin-conjugating enzyme]-L-cysteine + N(6)-ubiquitinyl-[acceptor protein]-L-lysine.. The protein operates within protein modification; protein ubiquitination. Its function is as follows. E3 ubiquitin-protein ligase that promotes the ubiquitination and proteasomal degradation of SIN3B. Independently of its E3 ligase activity, acts as a CTNNB1 stabilizer through USP7-mediated deubiquitination of CTNNB1 and promotes Wnt signaling. Plays a critical role in the regulation of nuclear lamina. This is E3 ubiquitin-protein ligase RNF220 (RNF220) from Macaca fascicularis (Crab-eating macaque).